The chain runs to 68 residues: Large ribosomal subunit protein bL32 (68 aa).

This sequence belongs to the bacterial ribosomal protein bL32 family.

The polypeptide is Large ribosomal subunit protein bL32 (Onion yellows phytoplasma (strain OY-M)).